Here is a 529-residue protein sequence, read N- to C-terminus: T-complex protein 1 subunit delta (529 aa).

Belongs to the TCP-1 chaperonin family. In terms of assembly, heterooligomeric complex of about 850 to 900 kDa that forms two stacked rings, 12 to 16 nm in diameter.

It localises to the cytoplasm. Functionally, molecular chaperone; assists the folding of proteins upon ATP hydrolysis. Known to play a role, in vitro, in the folding of actin and tubulin. This Eremothecium gossypii (strain ATCC 10895 / CBS 109.51 / FGSC 9923 / NRRL Y-1056) (Yeast) protein is T-complex protein 1 subunit delta (CCT4).